Reading from the N-terminus, the 117-residue chain is Large ribosomal subunit protein bL20 (117 aa).

It belongs to the bacterial ribosomal protein bL20 family.

Its function is as follows. Binds directly to 23S ribosomal RNA and is necessary for the in vitro assembly process of the 50S ribosomal subunit. It is not involved in the protein synthesizing functions of that subunit. This chain is Large ribosomal subunit protein bL20, found in Oleidesulfovibrio alaskensis (strain ATCC BAA-1058 / DSM 17464 / G20) (Desulfovibrio alaskensis).